Here is a 332-residue protein sequence, read N- to C-terminus: D-alanine--D-alanine ligase (332 aa).

The 206-residue stretch at 124–329 (KMWFSALNIP…FPDYLLSNIN (206 aa)) folds into the ATP-grasp domain. 154-209 (ALVNWGSIFVKAASQGSSVGCYRIDNQEDVASTLAQAFTYSDYVIVEKTISARELE) is a binding site for ATP. 3 residues coordinate Mg(2+): D283, E296, and N298.

This sequence belongs to the D-alanine--D-alanine ligase family. Mg(2+) serves as cofactor. It depends on Mn(2+) as a cofactor.

Its subcellular location is the cytoplasm. The catalysed reaction is 2 D-alanine + ATP = D-alanyl-D-alanine + ADP + phosphate + H(+). It functions in the pathway cell wall biogenesis; peptidoglycan biosynthesis. Cell wall formation. This is D-alanine--D-alanine ligase from Shewanella piezotolerans (strain WP3 / JCM 13877).